Here is a 1058-residue protein sequence, read N- to C-terminus: Zinc finger protein 865 (1058 aa).

3 disordered regions span residues 1–24 (MEAN…EDGV), 58–134 (LPCT…PPLF), and 156–201 (GNLK…ACDP). The span at 8–21 (SGAGGGGSSGIGGE) shows a compositional bias: gly residues. A compositionally biased stretch (pro residues) spans 61 to 78 (TPGPPPQPPPQPPPPQYD). Residues 93-113 (SSSSSSSSSSSSSSSSSSSSS) show a composition bias toward low complexity. Residues 120-133 (PPLPPTFGAPPPPL) are compositionally biased toward pro residues. Residues 172-187 (GLGTPTGTPGPLTTPS) are compositionally biased toward low complexity. 2 consecutive C2H2-type zinc fingers follow at residues 220-242 (FPCG…MLVH) and 248-270 (YECG…RRCH). The tract at residues 269 to 342 (CHKDVPPTPT…PPGVAMPPSA (74 aa)) is disordered. Positions 294–324 (PVSTASATASSDPAAVSSGPSATPATPATST) are enriched in low complexity. 9 consecutive C2H2-type zinc fingers follow at residues 350–372 (FACS…QIIH), 378–400 (FSCS…VKTH), 407–429 (LPCG…QAAH), 439–461 (YPCD…KAAH), 546–568 (FCCG…ERIH), 574–596 (HQCP…HVVH), 602–624 (YKCE…RQVH), 664–686 (YACS…KEAH), and 692–714 (YGCD…KLVH). Residues 459–486 (AAHAPPVATEPAKDGAASVPQPPPPFPP) form a disordered region. The disordered stretch occupies residues 721-743 (LLAPTPSGPQSSDGGSSGGGTDA). 9 consecutive C2H2-type zinc fingers follow at residues 791–813 (FSCA…KYVH), 819–841 (LGCG…RRSH), 847–869 (FRCP…QRCH), 875–897 (YRCG…RVVH), 903–925 (FKCG…RRLH), 931–953 (QRCG…QRLH), 959–981 (YRCE…QRAH), 988–1010 (LRCP…LAAH), and 1016–1038 (FRCS…RLMH). Lys-801 is covalently cross-linked (Glycyl lysine isopeptide (Lys-Gly) (interchain with G-Cter in SUMO2)). A Glycyl lysine isopeptide (Lys-Gly) (interchain with G-Cter in SUMO2) cross-link involves residue Lys-1039.

Belongs to the krueppel C2H2-type zinc-finger protein family.

The protein resides in the nucleus. Functionally, may be involved in transcriptional regulation. The sequence is that of Zinc finger protein 865 (Znf865) from Mus musculus (Mouse).